The sequence spans 383 residues: ATP phosphoribosyltransferase regulatory subunit (383 aa).

This sequence belongs to the class-II aminoacyl-tRNA synthetase family. HisZ subfamily. Heteromultimer composed of HisG and HisZ subunits.

The protein resides in the cytoplasm. The protein operates within amino-acid biosynthesis; L-histidine biosynthesis; L-histidine from 5-phospho-alpha-D-ribose 1-diphosphate: step 1/9. Functionally, required for the first step of histidine biosynthesis. May allow the feedback regulation of ATP phosphoribosyltransferase activity by histidine. The sequence is that of ATP phosphoribosyltransferase regulatory subunit from Cupriavidus pinatubonensis (strain JMP 134 / LMG 1197) (Cupriavidus necator (strain JMP 134)).